The primary structure comprises 105 residues: UPF0145 protein LPC_0273 (105 aa).

Belongs to the UPF0145 family.

The polypeptide is UPF0145 protein LPC_0273 (Legionella pneumophila (strain Corby)).